Here is a 235-residue protein sequence, read N- to C-terminus: Putative uridine kinase C227.14 (235 aa).

Residue 36-43 coordinates ATP; sequence GGPGSGKS.

This sequence belongs to the uridine kinase family.

It is found in the cytoplasm. It localises to the nucleus. It carries out the reaction uridine + ATP = UMP + ADP + H(+). The catalysed reaction is cytidine + ATP = CMP + ADP + H(+). The protein operates within pyrimidine metabolism; CTP biosynthesis via salvage pathway; CTP from cytidine: step 1/3. It functions in the pathway pyrimidine metabolism; UMP biosynthesis via salvage pathway; UMP from uridine: step 1/1. The sequence is that of Putative uridine kinase C227.14 from Schizosaccharomyces pombe (strain 972 / ATCC 24843) (Fission yeast).